Consider the following 59-residue polypeptide: Cecropin-B2 (59 aa).

The N-terminal stretch at Met1 to Ala23 is a signal peptide. The residue at position 57 (Leu57) is a Leucine amide.

This sequence belongs to the cecropin family.

The protein resides in the secreted. Functionally, cecropins have lytic and antibacterial activity against several Gram-positive and Gram-negative bacteria. The chain is Cecropin-B2 (CECB2) from Culex pipiens pipiens (Northern house mosquito).